A 303-amino-acid polypeptide reads, in one-letter code: Oxygen-dependent coproporphyrinogen-III oxidase (303 aa).

Position 93 (S93) interacts with substrate. A divalent metal cation is bound by residues H97 and H107. H107 serves as the catalytic Proton donor. 109-111 (NVR) serves as a coordination point for substrate. 2 residues coordinate a divalent metal cation: H149 and H179. The tract at residues 244 to 279 (YVEFNLVFDRGTLFGLQSGGRTESILLSMPPMAQWR) is important for dimerization. 262–264 (GGR) lines the substrate pocket.

Belongs to the aerobic coproporphyrinogen-III oxidase family. As to quaternary structure, homodimer. A divalent metal cation is required as a cofactor.

It is found in the cytoplasm. It catalyses the reaction coproporphyrinogen III + O2 + 2 H(+) = protoporphyrinogen IX + 2 CO2 + 2 H2O. It participates in porphyrin-containing compound metabolism; protoporphyrin-IX biosynthesis; protoporphyrinogen-IX from coproporphyrinogen-III (O2 route): step 1/1. Its function is as follows. Involved in the heme biosynthesis. Catalyzes the aerobic oxidative decarboxylation of propionate groups of rings A and B of coproporphyrinogen-III to yield the vinyl groups in protoporphyrinogen-IX. The sequence is that of Oxygen-dependent coproporphyrinogen-III oxidase from Bordetella petrii (strain ATCC BAA-461 / DSM 12804 / CCUG 43448).